A 247-amino-acid chain; its full sequence is C-type lectin domain family 7 member A (247 aa).

Over 1-44 (MEYHPDLENLDEDGYTQLHFDSRSNTRIAVVSEKGSCVASPPWR) the chain is Cytoplasmic. The ITAM-like signature appears at 15–18 (YTQL). The helical; Signal-anchor for type II membrane protein transmembrane segment at 45-65 (LIAVILGILCLVILVIAVVLG) threads the bilayer. Topologically, residues 66-247 (TMAIWRPNSG…CSICEKKFSM (182 aa)) are extracellular. The tract at residues 81–105 (NGYFPSRNKENHSQPTQSPLEESVT) is disordered. A glycan (N-linked (GlcNAc...) asparagine) is linked at N91. The segment covering 93 to 105 (SQPTQSPLEESVT) has biased composition (polar residues). 3 disulfide bridges follow: C120/C131, C148/C241, and C220/C233. Residues 127 to 242 (YEKSCYLFSP…CSVPSCSICE (116 aa)) form the C-type lectin domain. Position 146–153 (146–153 (RQCSQLGS)) interacts with (1,3-beta-D-glucosyl)n. The a divalent metal cation site is built by K157, D159, and E163. E195 lines the (1,3-beta-D-glucosyl)n pocket. E242 serves as a coordination point for a divalent metal cation.

Homodimer. Interacts with SYK; participates in leukocyte activation in presence of fungal pathogens. Interacts with CD37; this interaction controls CLEC7A-mediated IL-6 production. Post-translationally, phosphorylated on tyrosine residues in response to beta-glucan binding. As to expression, detected in dendritic cells, in paracortical and medullary regions of lymph nodes, and in spleen red pulp and white pulp.

It localises to the cell membrane. Its function is as follows. Lectin that functions as a pattern recognizing receptor (PRR) specific for beta-1,3-linked and beta-1,6-linked glucans, which constitute cell wall constituents from pathogenic bacteria and fungi. Necessary for the TLR2-mediated inflammatory response and activation of NF-kappa-B: upon beta-glucan binding, recruits SYK via its ITAM motif and promotes a signaling cascade that activates some CARD domain-BCL10-MALT1 (CBM) signalosomes, leading to the activation of NF-kappa-B and MAP kinase p38 (MAPK11, MAPK12, MAPK13 and/or MAPK14) pathways which stimulate expression of genes encoding pro-inflammatory cytokines and chemokines. Enhances cytokine production in macrophages and dendritic cells. Mediates production of reactive oxygen species in the cell. Mediates phagocytosis of C.albicans conidia. Binds T-cells in a way that does not involve their surface glycans and plays a role in T-cell activation. Stimulates T-cell proliferation. Induces phosphorylation of SCIMP after binding beta-glucans. The polypeptide is C-type lectin domain family 7 member A (CLEC7A) (Macaca mulatta (Rhesus macaque)).